A 315-amino-acid polypeptide reads, in one-letter code: Phosphatidylglycerol--prolipoprotein diacylglyceryl transferase (315 aa).

A run of 2 helical transmembrane segments spans residues 19-39 (FTIHMYAICILIGICVAVWIL) and 93-113 (VWEGGMAIFGGISVGTLVAFL). R141 serves as a coordination point for a 1,2-diacyl-sn-glycero-3-phospho-(1'-sn-glycerol). 2 helical membrane passes run 188 to 208 (LFHPTFLYEMIWNLIGAALII) and 256 to 276 (VWTAIIVFVLGCILFVVLYQY).

It belongs to the Lgt family.

The protein localises to the cell membrane. The enzyme catalyses L-cysteinyl-[prolipoprotein] + a 1,2-diacyl-sn-glycero-3-phospho-(1'-sn-glycerol) = an S-1,2-diacyl-sn-glyceryl-L-cysteinyl-[prolipoprotein] + sn-glycerol 1-phosphate + H(+). The protein operates within protein modification; lipoprotein biosynthesis (diacylglyceryl transfer). Functionally, catalyzes the transfer of the diacylglyceryl group from phosphatidylglycerol to the sulfhydryl group of the N-terminal cysteine of a prolipoprotein, the first step in the formation of mature lipoproteins. The protein is Phosphatidylglycerol--prolipoprotein diacylglyceryl transferase of Bifidobacterium longum (strain NCC 2705).